A 177-amino-acid polypeptide reads, in one-letter code: NADH-quinone oxidoreductase subunit B (177 aa).

Positions 56, 57, 121, and 151 each coordinate [4Fe-4S] cluster.

The protein belongs to the complex I 20 kDa subunit family. NDH-1 is composed of 14 different subunits. Subunits NuoB, C, D, E, F, and G constitute the peripheral sector of the complex. It depends on [4Fe-4S] cluster as a cofactor.

The protein localises to the cell inner membrane. It carries out the reaction a quinone + NADH + 5 H(+)(in) = a quinol + NAD(+) + 4 H(+)(out). Its function is as follows. NDH-1 shuttles electrons from NADH, via FMN and iron-sulfur (Fe-S) centers, to quinones in the respiratory chain. Couples the redox reaction to proton translocation (for every two electrons transferred, four hydrogen ions are translocated across the cytoplasmic membrane), and thus conserves the redox energy in a proton gradient. The protein is NADH-quinone oxidoreductase subunit B of Roseobacter denitrificans (strain ATCC 33942 / OCh 114) (Erythrobacter sp. (strain OCh 114)).